The sequence spans 859 residues: DNA mismatch repair protein MutS (859 aa).

Gly614–Ser621 serves as a coordination point for ATP.

The protein belongs to the DNA mismatch repair MutS family.

Its function is as follows. This protein is involved in the repair of mismatches in DNA. It is possible that it carries out the mismatch recognition step. This protein has a weak ATPase activity. The chain is DNA mismatch repair protein MutS from Histophilus somni (strain 2336) (Haemophilus somnus).